The following is a 124-amino-acid chain: MPTIQQLIRSAREKTDKKTKSPALKSCPQRRGVCTRVYTTTPKKPNSALRKVARVRLTSGFEVTAYIPGIGHNLQEHSVVMIRGGRVKDLPGVRYHIIRGTLDTAGVKDRRNGRSKYGAKRPKA.

Residues 8-28 (IRSAREKTDKKTKSPALKSCP) are disordered. Basic and acidic residues predominate over residues 10–19 (SAREKTDKKT). 3-methylthioaspartic acid is present on D89.

The protein belongs to the universal ribosomal protein uS12 family. As to quaternary structure, part of the 30S ribosomal subunit. Contacts proteins S8 and S17. May interact with IF1 in the 30S initiation complex.

In terms of biological role, with S4 and S5 plays an important role in translational accuracy. Functionally, interacts with and stabilizes bases of the 16S rRNA that are involved in tRNA selection in the A site and with the mRNA backbone. Located at the interface of the 30S and 50S subunits, it traverses the body of the 30S subunit contacting proteins on the other side and probably holding the rRNA structure together. The combined cluster of proteins S8, S12 and S17 appears to hold together the shoulder and platform of the 30S subunit. In Arthrospira platensis (Spirulina platensis), this protein is Small ribosomal subunit protein uS12.